The primary structure comprises 268 residues: UPF0719 transmembrane protein aq_1349 (268 aa).

Transmembrane regions (helical) follow at residues 5–24 (LIALFWVIFSKYVFDVLFFR), 37–59 (NLALSLSYAGYFLGLAFSFYSVY), 69–91 (LYLIFVSFTLLLGVYIFDLIFLR), 104–126 (AGAGITQGIYFLSLGILISASFW), 130–152 (SFILSVIYSLIYLSLGMVMLFIS), 173–195 (FSASLVLGSITLGVSVVLYGAIS), 210–232 (VLYFVVSQVLMVIFYVVVEFLLF), and 245–267 (NLSASLILSATFIASAFITLAVM).

Belongs to the UPF0719 family.

The protein localises to the cell membrane. In Aquifex aeolicus (strain VF5), this protein is UPF0719 transmembrane protein aq_1349.